A 397-amino-acid chain; its full sequence is Tryptophan synthase beta chain (397 aa).

Lys-86 carries the post-translational modification N6-(pyridoxal phosphate)lysine.

It belongs to the TrpB family. As to quaternary structure, tetramer of two alpha and two beta chains. Requires pyridoxal 5'-phosphate as cofactor.

It carries out the reaction (1S,2R)-1-C-(indol-3-yl)glycerol 3-phosphate + L-serine = D-glyceraldehyde 3-phosphate + L-tryptophan + H2O. The protein operates within amino-acid biosynthesis; L-tryptophan biosynthesis; L-tryptophan from chorismate: step 5/5. Its function is as follows. The beta subunit is responsible for the synthesis of L-tryptophan from indole and L-serine. The polypeptide is Tryptophan synthase beta chain (Aeromonas salmonicida (strain A449)).